Reading from the N-terminus, the 240-residue chain is Uridylate cyclase (240 aa).

The region spanning 45 to 180 (TYLYADMANS…RAPNLAAKLS (136 aa)) is the Guanylate cyclase domain. Y48 contributes to the a ribonucleoside 5'-triphosphate binding site. Residues D50 and D94 each coordinate Mn(2+). Residue R95 coordinates a ribonucleoside 5'-triphosphate.

The protein belongs to the adenylyl cyclase class-4/guanylyl cyclase family. Pyrimidine cyclase subfamily. As to quaternary structure, homodimer. It depends on Mn(2+) as a cofactor.

The protein resides in the cytoplasm. It catalyses the reaction UTP = 3',5'-cyclic UMP + diphosphate. Pycsar (pyrimidine cyclase system for antiphage resistance) provides immunity against bacteriophage. The pyrimidine cyclase (PycC) synthesizes cyclic nucleotides in response to infection; these serve as specific second messenger signals. The signals activate the adjacent effector, leading to bacterial cell death and abortive phage infection. A clade B Pycsar system. Functionally, the pyrimidine cyclase gene of a two-gene Pycsar system, weakly generates cyclic UMP (cUMP) from UTP, has little to no activity on ATP, CTP or GTP. Expression of this and adjacent effector RsmPycTM (AC A0A1V0HUU2) probably confers resistance to bacteriophage. The genes are probably only expressed in response to bacteriophage infection. In Rhodovulum sp. (strain MB263), this protein is Uridylate cyclase.